A 357-amino-acid chain; its full sequence is 3-isopropylmalate dehydrogenase (357 aa).

Position 76–89 (76–89 (GPKWDALDSNIRPE)) interacts with NAD(+). 4 residues coordinate substrate: Arg-96, Arg-106, Arg-134, and Asp-224. Residues Asp-224, Asp-248, and Asp-252 each contribute to the Mg(2+) site. An NAD(+)-binding site is contributed by 282–294 (GSAPDIAGQGVAN).

This sequence belongs to the isocitrate and isopropylmalate dehydrogenases family. LeuB type 1 subfamily. Homodimer. Requires Mg(2+) as cofactor. Mn(2+) serves as cofactor.

It is found in the cytoplasm. The catalysed reaction is (2R,3S)-3-isopropylmalate + NAD(+) = 4-methyl-2-oxopentanoate + CO2 + NADH. It functions in the pathway amino-acid biosynthesis; L-leucine biosynthesis; L-leucine from 3-methyl-2-oxobutanoate: step 3/4. Its function is as follows. Catalyzes the oxidation of 3-carboxy-2-hydroxy-4-methylpentanoate (3-isopropylmalate) to 3-carboxy-4-methyl-2-oxopentanoate. The product decarboxylates to 4-methyl-2 oxopentanoate. This chain is 3-isopropylmalate dehydrogenase, found in Saccharophagus degradans (strain 2-40 / ATCC 43961 / DSM 17024).